Reading from the N-terminus, the 600-residue chain is Probable pectin methyltransferase QUA3 (600 aa).

The Cytoplasmic portion of the chain corresponds to 1-18; the sequence is MGHVNLPASKRGNPRQWR. A helical; Signal-anchor for type II membrane protein membrane pass occupies residues 19–39; it reads LLDIVTAAFFGIVLLFFILLF. Topologically, residues 40–600 are lumenal; sequence TPLGDSMAAS…SLWKLPSNSH (561 aa). The N-linked (GlcNAc...) asparagine glycan is linked to Asn283.

Belongs to the methyltransferase superfamily. In terms of tissue distribution, highly expressed and abundant in suspension-cultured cells, but low levels in seedlings.

It localises to the golgi apparatus membrane. It functions in the pathway glycan metabolism; pectin biosynthesis. S-adenosyl-L-methionine (SAM)-dependent methyltransferase (MTase) which mediates the methylesterification of the pectin homogalacturonan (HG) and thus regulates cell wall biosynthesis, at least in suspension-cultured cells. This chain is Probable pectin methyltransferase QUA3, found in Arabidopsis thaliana (Mouse-ear cress).